We begin with the raw amino-acid sequence, 87 residues long: MKNFETLFAELSEKAATRPAGSRTVAELESGVHGIGKKVVEEAAEVWMAAEYESDEAAAEEISQLLYHLQVLMLAKGLTLEDVYKHL.

This sequence belongs to the PRA-PH family.

The protein localises to the cytoplasm. The enzyme catalyses 1-(5-phospho-beta-D-ribosyl)-ATP + H2O = 1-(5-phospho-beta-D-ribosyl)-5'-AMP + diphosphate + H(+). It functions in the pathway amino-acid biosynthesis; L-histidine biosynthesis; L-histidine from 5-phospho-alpha-D-ribose 1-diphosphate: step 2/9. In Arthrobacter sp. (strain FB24), this protein is Phosphoribosyl-ATP pyrophosphatase.